Reading from the N-terminus, the 62-residue chain is UPF0370 protein ESA_00777 (62 aa).

The chain crosses the membrane as a helical span at residues 4–24 (LGKYWWVLVLVFLLGVLLNVI). Residues 36-51 (MDNRPELPPHRDFNDK) are compositionally biased toward basic and acidic residues. A disordered region spans residues 36–62 (MDNRPELPPHRDFNDKWDDEDDWPKKK). The span at 52-62 (WDDEDDWPKKK) shows a compositional bias: acidic residues.

Belongs to the UPF0370 family.

The protein resides in the cell membrane. This is UPF0370 protein ESA_00777 from Cronobacter sakazakii (strain ATCC BAA-894) (Enterobacter sakazakii).